The primary structure comprises 235 residues: Transcriptional regulatory protein CseB (235 aa).

In terms of domain architecture, Response regulatory spans 6 to 119; the sequence is HVLFVEDDDV…VLVARIRAVL (114 aa). Position 55 is a 4-aspartylphosphate (aspartate 55). The segment at residues 141–235 is a DNA-binding region (ompR/PhoB-type); the sequence is GGVLTFGELE…VRGFGYKLKA (95 aa).

Post-translationally, phosphorylated by CseC.

Its subcellular location is the cytoplasm. Member of the two-component regulatory system CseB/CseC involved in the stability of the cell envelope. CseB activates transcription of RNA polymerase sigma-E factor, in response to changes in the cell envelope. The sequence is that of Transcriptional regulatory protein CseB (cseB) from Streptomyces avermitilis (strain ATCC 31267 / DSM 46492 / JCM 5070 / NBRC 14893 / NCIMB 12804 / NRRL 8165 / MA-4680).